A 470-amino-acid chain; its full sequence is MDCVCDETMELILRFDDVIEPEKLRQSLGRLLEIGNWRKLGARVRPRENNAGVKFEYHIPEKYTETRPGFIYRESKYSDGISNHPTASRLPRQHSGLSILGATQDFASLGLQPGDPRHLADWAYTDLPQLFFHHTTFKDATVIAMTYPHSLMDGMGHGTFLRAWIAVLHGREDEVPELGGFEDARSHLTEGAPATKYLLHQYILGWYQTIVFGCWRFIETLWSSEEDRVVCIPRQFVQELRANVLDELDSGKGETFVSNNDVLLAWFARTILSIAGPLRNRSLVLMNSFNIRSVALSSQPAFINNAVIPACTILPIWKVLREPMSFLAMQVRRSLVQQRGLDQIHAWYKLMVSSLEQTGRPRVIGTSDGFTMIFSNWDKASLFRLDLSPAASEMGLPLGQRSTQLGYPSCVLCTTPFSMLGVRSGGCCLGKDAEGNWWTQWRLRRTEWDRLETILETINHQRQTHTGKGV.

Residues histidine 149 and aspartate 386 each act as proton acceptor in the active site.

Belongs to the plant acyltransferase family. As to quaternary structure, monomer.

The protein operates within secondary metabolite biosynthesis. Functionally, O-acetyltransferase; part of the gene cluster that mediates the biosynthesis of protubonine B, a hydroxylated and diacetylated cyclo-L-Trp-L-Leu derivative. Within the pathway, pboC catalyzes the acetylation of protubonine D at the hydroxy group to produce protubonine C. The first step of the protubonine B synthesis is performed by the nonribosomal peptide synthetase pboA that catalyzes the formation of cyclo-L-Trp-L-Leu by condensing L-Leu with L-Trp. The flavin-dependent monooxygenase pboD is responsible for hydroxylation at C-3 of the indole ring and subsequent formation of the pyrrolidine ring, leadind to protubonine D. Protubonine D is further diacetylated by two acetyltransferases, pboB and pboC, to form the final product protubonine B via protubonine C. The chain is O-acyltransferase pboC from Aspergillus ustus.